The chain runs to 536 residues: CTP synthase (536 aa).

The interval 1–267 (MSKFVFVTGG…CKETLNYLEL (267 aa)) is amidoligase domain. S13 contacts CTP. S13 contributes to the UTP binding site. ATP-binding positions include 14 to 19 (SIGKGI) and D71. Positions 71 and 141 each coordinate Mg(2+). CTP is bound by residues 148 to 150 (DIE), 188 to 193 (KTKPTQ), and K224. Residues 188–193 (KTKPTQ) and K224 each bind UTP. The 243-residue stretch at 292 to 534 (KVALVGKYIE…IKASQDKLTQ (243 aa)) folds into the Glutamine amidotransferase type-1 domain. G354 is an L-glutamine binding site. C381 acts as the Nucleophile; for glutamine hydrolysis in catalysis. L-glutamine is bound by residues 382-385 (LGMQ), E405, and R462. Catalysis depends on residues H507 and E509.

The protein belongs to the CTP synthase family. As to quaternary structure, homotetramer.

It catalyses the reaction UTP + L-glutamine + ATP + H2O = CTP + L-glutamate + ADP + phosphate + 2 H(+). The enzyme catalyses L-glutamine + H2O = L-glutamate + NH4(+). It carries out the reaction UTP + NH4(+) + ATP = CTP + ADP + phosphate + 2 H(+). Its pathway is pyrimidine metabolism; CTP biosynthesis via de novo pathway; CTP from UDP: step 2/2. Allosterically activated by GTP, when glutamine is the substrate; GTP has no effect on the reaction when ammonia is the substrate. The allosteric effector GTP functions by stabilizing the protein conformation that binds the tetrahedral intermediate(s) formed during glutamine hydrolysis. Inhibited by the product CTP, via allosteric rather than competitive inhibition. In terms of biological role, catalyzes the ATP-dependent amination of UTP to CTP with either L-glutamine or ammonia as the source of nitrogen. Regulates intracellular CTP levels through interactions with the four ribonucleotide triphosphates. This is CTP synthase from Prochlorococcus marinus (strain MIT 9301).